Reading from the N-terminus, the 443-residue chain is tRNA-2-methylthio-N(6)-dimethylallyladenosine synthase (443 aa).

The MTTase N-terminal domain maps to 3–120 (SKLYIKTFGC…LPELIDARRR (118 aa)). [4Fe-4S] cluster-binding residues include Cys-12, Cys-49, Cys-83, Cys-157, Cys-161, and Cys-164. Residues 143 to 377 (RTTGATAFVS…KIQRNAQMIS (235 aa)) enclose the Radical SAM core domain. Positions 378–441 (QSMVDTIQRV…SHTLRGEISD (64 aa)) constitute a TRAM domain.

Belongs to the methylthiotransferase family. MiaB subfamily. As to quaternary structure, monomer. [4Fe-4S] cluster is required as a cofactor.

It localises to the cytoplasm. The enzyme catalyses N(6)-dimethylallyladenosine(37) in tRNA + (sulfur carrier)-SH + AH2 + 2 S-adenosyl-L-methionine = 2-methylsulfanyl-N(6)-dimethylallyladenosine(37) in tRNA + (sulfur carrier)-H + 5'-deoxyadenosine + L-methionine + A + S-adenosyl-L-homocysteine + 2 H(+). Catalyzes the methylthiolation of N6-(dimethylallyl)adenosine (i(6)A), leading to the formation of 2-methylthio-N6-(dimethylallyl)adenosine (ms(2)i(6)A) at position 37 in tRNAs that read codons beginning with uridine. The chain is tRNA-2-methylthio-N(6)-dimethylallyladenosine synthase from Nitrosomonas eutropha (strain DSM 101675 / C91 / Nm57).